The sequence spans 119 residues: Beta-2-microglobulin (119 aa).

Residues 1 to 20 (MARSVTVIFLVLVSLAVVLA) form the signal peptide. In terms of domain architecture, Ig-like C1-type spans 25 to 114 (PQIQVYSRHP…VTLKEPKTVT (90 aa)). Cys45 and Cys100 are disulfide-bonded.

It belongs to the beta-2-microglobulin family. As to quaternary structure, heterodimer of an alpha chain and a beta chain. Beta-2-microglobulin is the beta-chain of major histocompatibility complex class I molecules. Forms a heterotrimer with MR1 and a metabolite antigen.

The protein localises to the secreted. Functionally, component of the class I major histocompatibility complex (MHC). Involved in the presentation of peptide antigens to the immune system. The sequence is that of Beta-2-microglobulin (B2m) from Rattus norvegicus (Rat).